We begin with the raw amino-acid sequence, 615 residues long: Vitamin B12 transporter BtuB (615 aa).

Positions 1–20 (MIKKVSLMTALSVTAFSGWA) are cleaved as a signal peptide. Residues 25–32 (DSLVVTAN) carry the TonB box motif. Residues 37–151 (PANTVLAPTS…IGGVVNIITT (115 aa)) enclose the TBDR plug domain. Cyanocob(III)alamin-binding positions include Ser-84, Asn-91, and 109 to 110 (VT). Positions 154–615 (KDGTTLNAGV…EYTLSGSYTF (462 aa)) constitute a TBDR beta-barrel domain. 3 consecutive transmembrane segments (beta stranded) span residues 157-164 (TTLNAGVG), 168-177 (YQNYGGSTQQ), and 183-194 (TRVTLAGDYTYT). Residues Asp-198, Gln-210, Asp-212, and Asp-214 each contribute to the Ca(2+) site. The next 2 beta stranded transmembrane spans lie at 216-226 (YMNKTIYGALE) and 231-247 (DQWSGFVRGFGYSNRTA). Ca(2+) contacts are provided by Tyr-248 and Asp-249. Ala-250 lines the cyanocob(III)alamin pocket. Asp-262 contacts Ca(2+). Beta stranded transmembrane passes span 264–278 (RQLYSQTWDTGLRFN), 280–297 (GIFHSQLLSSYSHSKDYN), 310–326 (TLDEIKQYNVQWTNSVD), 329–338 (HGNVGAGVDW), 354–370 (TNLRNTGVYLTALQKFG), 372–382 (FTLEGAARSDD), 386–401 (FGRHGTWQSSAAWEFI), 404–418 (YRFIASYGTAYKAPN), 435–444 (ESKQWEGAFE), 450–459 (VSWRVSAYRN), 474–491 (YYNVGKARIKGVEATASF), 495–510 (PLTHTVGYDYVDARNA), 518–530 (RRAKQQVKYQLDT), 536–551 (DWSLTYHYLGTRYDTD), 559–573 (KVKMGGVSLWDLAVS), 586–597 (IANLFDKDYETV), and 603–615 (AGREYTLSGSYTF). Thr-310 is a binding site for cyanocob(III)alamin. Arg-518 lines the cyanocob(III)alamin pocket. Positions 598–615 (YGYETAGREYTLSGSYTF) match the TonB C-terminal box motif.

It belongs to the TonB-dependent receptor family. BtuB (TC 1.B.14.3.1) subfamily.

Its subcellular location is the cell outer membrane. Involved in the active translocation of vitamin B12 (cyanocobalamin) across the outer membrane to the periplasmic space. It derives its energy for transport by interacting with the trans-periplasmic membrane protein TonB. The chain is Vitamin B12 transporter BtuB from Enterobacter sp. (strain 638).